The chain runs to 423 residues: Deferrochelatase (423 aa).

A signal peptide (tat-type signal) is located at residues 1–35 (MQYKDENGVNEPSRRRLLKVIGALALAGSCPVAHA). 236–238 (GTA) is a binding site for heme b. Residues 236-238 (GTA) and arginine 296 contribute to the protoporphyrin IX site. Heme b contacts are provided by residues histidine 329, 334 to 336 (NPR), and arginine 347.

Homodimer. Part of a ferrous iron transporter composed of EfeU, EfeO and EfeB. However, this EfeUOB tripartite iron transporter is defective in E.coli strain K12 due to a frameshift mutation in EfeU. The cofactor is heme b. Exported by the Tat system. The position of the signal peptide cleavage has been experimentally proven. Can also be exported by the Sec system.

The protein localises to the periplasm. The enzyme catalyses heme b + 2 H(+) = protoporphyrin IX + Fe(2+). Functionally, involved in the recovery of exogenous heme iron. Extracts iron from heme while preserving the protoporphyrin ring intact. Also displays peroxidase activity on guaiacol in vitro. This is Deferrochelatase (efeB) from Escherichia coli (strain K12).